A 223-amino-acid polypeptide reads, in one-letter code: MDLASLRAQQIELASSVIREDRLDKDPPDLIAGADVGFEQGGEVTRAAMVLLKYPSLELVEYKVARIATTMPYIPGFLSFREYPALLAAWEMLSQKPDLVFVDGHGISHPRRLGVASHFGLLVDVPTIGVAKKRLCGKFEPLSSEPGALAPLMDKGEQLAWVWRSKARCNPLFIATGHRVSVDSALAWVQRCMKGYRLPEPTRWADAVASERPAFVRYTANQP.

Positions 35 and 103 each coordinate Mg(2+).

The protein belongs to the endonuclease V family. Mg(2+) serves as cofactor.

It localises to the cytoplasm. It catalyses the reaction Endonucleolytic cleavage at apurinic or apyrimidinic sites to products with a 5'-phosphate.. Its function is as follows. DNA repair enzyme involved in the repair of deaminated bases. Selectively cleaves double-stranded DNA at the second phosphodiester bond 3' to a deoxyinosine leaving behind the intact lesion on the nicked DNA. This Escherichia coli O45:K1 (strain S88 / ExPEC) protein is Endonuclease V.